A 259-amino-acid chain; its full sequence is Gasdermin bGSDM (259 aa).

C3 is lipidated: S-palmitoyl cysteine. 4 beta stranded membrane-spanning segments follow: residues 70–86 (FQFRASSILQVGVAASV), 98–116 (SGSFSSAFSSSNADTIQLS), 162–179 (GIRISVADKSKKQVDLSA), and 187–203 (AKAKMELKREDTGSYAF). The tract at residues 244–259 (PFAFIGDDAFVDLPES) is C-terminal region.

It belongs to the bacterial gasdermin family. Monomer in solution. As to quaternary structure, forms large, homooligomeric ring-shaped pores when inserted in membranes. Post-translationally, palmitoylation helps stabilize the inactive state; may self palmitoylate. Palmitoylation plays a significant role in pore formation.

The protein resides in the cytoplasm. It localises to the cell inner membrane. The full-length protein before cleavage is inactive: intramolecular interactions between the N-terminal domain and the C-terminal region as well as the lipid modification, mediate autoinhibition. The pyroptosis-like-inducing activity is carried by the released N-terminal domain (Gasdermin bGSDM, N-terminus). In terms of biological role, precursor of a pore-forming protein involved in defense against bacteriophages. Expression of bGSDM and the neighboring protease gene (Ga0098714_109514) is toxic in E.coli on solid medium. Cleavage of this precursor by its dedicated protease releases the active moiety (gasdermin bGSDM, N-terminus) which inserts into membranes, forming pores and triggering cell death. Pore-forming protein that causes membrane permeabilization via a pyroptosis-like activity. Makes ring-like pores when released. The polypeptide is Gasdermin bGSDM (Bradyrhizobium tropiciagri).